An 80-amino-acid polypeptide reads, in one-letter code: Acyl carrier protein (80 aa).

Residues 2-77 form the Carrier domain; that stretch reads KNIEERIKKI…KSIDFIQKKN (76 aa). Ser-37 is modified (O-(pantetheine 4'-phosphoryl)serine).

It belongs to the acyl carrier protein (ACP) family. Post-translationally, 4'-phosphopantetheine is transferred from CoA to a specific serine of apo-ACP by AcpS. This modification is essential for activity because fatty acids are bound in thioester linkage to the sulfhydryl of the prosthetic group.

The protein localises to the cytoplasm. Its pathway is lipid metabolism; fatty acid biosynthesis. Carrier of the growing fatty acid chain in fatty acid biosynthesis. The polypeptide is Acyl carrier protein (Buchnera aphidicola subsp. Acyrthosiphon pisum (strain APS) (Acyrthosiphon pisum symbiotic bacterium)).